We begin with the raw amino-acid sequence, 224 residues long: Ribose-5-phosphate isomerase A (224 aa).

Substrate-binding positions include 26–29 (TGST), 81–84 (DGAD), and 94–97 (KGGG). Residue glutamate 103 is the Proton acceptor of the active site. Lysine 121 is a binding site for substrate.

The protein belongs to the ribose 5-phosphate isomerase family. Homodimer.

It carries out the reaction aldehydo-D-ribose 5-phosphate = D-ribulose 5-phosphate. The protein operates within carbohydrate degradation; pentose phosphate pathway; D-ribose 5-phosphate from D-ribulose 5-phosphate (non-oxidative stage): step 1/1. Its function is as follows. Catalyzes the reversible conversion of ribose-5-phosphate to ribulose 5-phosphate. This is Ribose-5-phosphate isomerase A from Listeria monocytogenes serovar 1/2a (strain ATCC BAA-679 / EGD-e).